Reading from the N-terminus, the 261-residue chain is MPSRCPGVAGPPALARTEGSEGSAGQSYHQNSKGTGEQHKAERIKEGHRMSSHTAKLQELWRTTQIQTIHIPKSMTDASFLKHPELTSGQKRYLCSIAKICNSSYLRTLMKRQYMHLFHHGLQKPGVLTHHRSHISSRYSQKQHSPCTTWRHHLEREDSLGIAAEAPEMIIHALWRPLRHKEGLKIGYASKTRCKSLKIFRRPGRLFLLPVSSKDYQPCMNDETKEEDLLNECMQSMSIQEQGSSHASLTVSCPTPSSAIP.

A disordered region spans residues 1–52 (MPSRCPGVAGPPALARTEGSEGSAGQSYHQNSKGTGEQHKAERIKEGHRMSS). A compositionally biased stretch (polar residues) spans 23–35 (SAGQSYHQNSKGT). A compositionally biased stretch (basic and acidic residues) spans 36–49 (GEQHKAERIKEGHR).

This sequence belongs to the FAM216 family.

The protein is Protein FAM216A (Fam216a) of Rattus norvegicus (Rat).